Consider the following 119-residue polypeptide: Large ribosomal subunit protein bL20 (119 aa).

The protein belongs to the bacterial ribosomal protein bL20 family.

Binds directly to 23S ribosomal RNA and is necessary for the in vitro assembly process of the 50S ribosomal subunit. It is not involved in the protein synthesizing functions of that subunit. This Chloroflexus aurantiacus (strain ATCC 29366 / DSM 635 / J-10-fl) protein is Large ribosomal subunit protein bL20.